A 392-amino-acid polypeptide reads, in one-letter code: Protein NolC (392 aa).

Residues 2 to 71 (KRDLYETLGV…RAAYDRYGHA (70 aa)) enclose the J domain. 2 disordered regions span residues 103–142 (RRDD…QDGA) and 157–244 (LGRE…TGLR). Residues 157-170 (LGREAGHQPEDLRH) are compositionally biased toward basic and acidic residues. The span at 171 to 185 (LPGLRPYPRRPGLLL) shows a compositional bias: low complexity. Residues 186–203 (DRTHLPDLRRSRSDDHRS) are compositionally biased toward basic and acidic residues. Residues 227–241 (HRGRHAYPPLRRGRT) show a composition bias toward basic residues.

The polypeptide is Protein NolC (nolC) (Rhizobium fredii (Sinorhizobium fredii)).